A 199-amino-acid polypeptide reads, in one-letter code: Gamma-glutamylcyclotransferase 2-3 (199 aa).

Position 5–10 (5–10) interacts with substrate; the sequence is VFGYGS. Residue glutamate 86 is the Proton acceptor of the active site.

The protein belongs to the gamma-glutamylcyclotransferase family. Requires Mn(2+) as cofactor.

Its subcellular location is the cytoplasm. It catalyses the reaction glutathione = L-cysteinylglycine + 5-oxo-L-proline. Its function is as follows. Converts GSH to 5-oxoproline and cysteine-glycine (Cys-Gly) dipeptide in vitro and plays a significant role in glutathione (GSH) homeostasis. Has no activity towards gamma-glutamyl-L-cysteine but possesses very low activity towards gamma-glutamyl-L-alanine. This chain is Gamma-glutamylcyclotransferase 2-3, found in Arabidopsis thaliana (Mouse-ear cress).